We begin with the raw amino-acid sequence, 158 residues long: Ribosome maturation factor RimP (158 aa).

Belongs to the RimP family.

The protein localises to the cytoplasm. Its function is as follows. Required for maturation of 30S ribosomal subunits. This chain is Ribosome maturation factor RimP, found in Pseudomonas savastanoi pv. phaseolicola (strain 1448A / Race 6) (Pseudomonas syringae pv. phaseolicola (strain 1448A / Race 6)).